The chain runs to 497 residues: Probable cytosol aminopeptidase (497 aa).

Lys-263 and Asp-268 together coordinate Mn(2+). Lys-275 is a catalytic residue. Asp-286, Asp-345, and Glu-347 together coordinate Mn(2+). Residue Arg-349 is part of the active site.

It belongs to the peptidase M17 family. Mn(2+) is required as a cofactor.

It is found in the cytoplasm. It carries out the reaction Release of an N-terminal amino acid, Xaa-|-Yaa-, in which Xaa is preferably Leu, but may be other amino acids including Pro although not Arg or Lys, and Yaa may be Pro. Amino acid amides and methyl esters are also readily hydrolyzed, but rates on arylamides are exceedingly low.. The enzyme catalyses Release of an N-terminal amino acid, preferentially leucine, but not glutamic or aspartic acids.. In terms of biological role, presumably involved in the processing and regular turnover of intracellular proteins. Catalyzes the removal of unsubstituted N-terminal amino acids from various peptides. In Agrobacterium fabrum (strain C58 / ATCC 33970) (Agrobacterium tumefaciens (strain C58)), this protein is Probable cytosol aminopeptidase.